Reading from the N-terminus, the 556-residue chain is Arginine--tRNA ligase (556 aa).

The short motif at 133–143 (ANPTGPIHIGH) is the 'HIGH' region element.

Belongs to the class-I aminoacyl-tRNA synthetase family. In terms of assembly, monomer.

It is found in the cytoplasm. It carries out the reaction tRNA(Arg) + L-arginine + ATP = L-arginyl-tRNA(Arg) + AMP + diphosphate. This Dehalococcoides mccartyi (strain CBDB1) protein is Arginine--tRNA ligase.